A 95-amino-acid polypeptide reads, in one-letter code: MPNKMSAEKRVRVSEKRRVLNKAYKTSMKNKIKAVLAAIAQKKSAEEIMELFRKAQSAIDKAAKSGAIHKNQASRRKSRLAVKVKAYLGAEKQGV.

The protein belongs to the bacterial ribosomal protein bS20 family.

Its function is as follows. Binds directly to 16S ribosomal RNA. In Fervidobacterium nodosum (strain ATCC 35602 / DSM 5306 / Rt17-B1), this protein is Small ribosomal subunit protein bS20.